The chain runs to 206 residues: Large ribosomal subunit protein uL3 (206 aa).

Residues Val-122–Arg-154 form a disordered region.

The protein belongs to the universal ribosomal protein uL3 family. Part of the 50S ribosomal subunit. Forms a cluster with proteins L14 and L19.

In terms of biological role, one of the primary rRNA binding proteins, it binds directly near the 3'-end of the 23S rRNA, where it nucleates assembly of the 50S subunit. This chain is Large ribosomal subunit protein uL3, found in Leptospira borgpetersenii serovar Hardjo-bovis (strain JB197).